The chain runs to 474 residues: Tubulin gamma-1 chain (474 aa).

142-148 (AGGTGSG) serves as a coordination point for GTP.

The protein belongs to the tubulin family. In terms of assembly, gamma-tubulin complex is composed of gamma-tubulin and GCP proteins.

The protein resides in the cytoplasm. Its subcellular location is the cytoskeleton. The protein localises to the microtubule organizing center. It is found in the nucleus. It localises to the cell cortex. Tubulin is the major constituent of microtubules. The gamma chain is found at microtubule organizing centers (MTOC) such as the spindle poles, suggesting that it is involved in the minus-end nucleation of microtubule assembly. Its function is as follows. Gamma-tubulin complex is essential for the control of microtubular network remodeling in the course of initiation and development of giant-feeding cells, and for the successful reproduction of nematodes (e.g. Meloidogyne spp.) in their plant hosts. This chain is Tubulin gamma-1 chain (TUBG1), found in Arabidopsis thaliana (Mouse-ear cress).